Consider the following 217-residue polypeptide: MKWDKRVVALILAVMIVCPLFAAPAHAQEQSILDKLVVLPSGEYNHSEAAAMKQRLEKIPTSILDALYSKGVKIKLTQGAITNEPELAYLKGVVPRGWEGTGLTWDDVPGVSERVVAVRIGYSEKGKGHNSLNLEIHETLHAVDRLVLNEVSGTDEFINIFNKEASVKYKGDGYVSAYPTEYFAEAASLYLYSDATRSDLKDSMPLTYEFMAKLFAN.

A signal peptide spans 1-27 (MKWDKRVVALILAVMIVCPLFAAPAHA). The ATLF-like domain maps to 30–216 (QSILDKLVVL…TYEFMAKLFA (187 aa)). Residues 112 to 115 (SERV) form a plays a crucial role in substrate specificity region. Histidine 137 serves as a coordination point for Zn(2+). Glutamate 138 serves as the catalytic Proton acceptor. Zn(2+) contacts are provided by histidine 141, tyrosine 174, and glutamate 181.

The protein belongs to the peptidase M34 family. Pro-Pro endopeptidase subfamily. As to quaternary structure, monomer. Zn(2+) serves as cofactor.

The protein resides in the secreted. The enzyme catalyses The enzyme catalyzes the hydrolytic cleavage of peptide bonds between two proline residues.. Zinc-dependent endoprotease with a unique preference for proline residues surrounding the scissile bond, which cleaves in a PLP-|-PVP motif. Cleaves the cell surface protein encoded by an adjacent gene, which contains two PPEP-2 cleaving sites and putative extracellular matrix-binding domains. Thereby, may have a role in the regulation of P.alvei adhesion. Is not able to cleave within the PVP-|-PVQ motif, and only shows a very poor cleavage of the VNP-|-PVP motif in vitro, which is the optimal substrate peptide for PPEP-1 from P.difficile. This chain is Pro-Pro endopeptidase, found in Paenibacillus alvei (strain ATCC 6344 / DSM 29 / NBRC 3343 / NCIMB 9371 / NCTC 6352) (Bacillus alvei).